The chain runs to 425 residues: Enolase (425 aa).

Glutamine 162 is a binding site for (2R)-2-phosphoglycerate. Glutamate 204 serves as the catalytic Proton donor. 3 residues coordinate Mg(2+): aspartate 241, glutamate 284, and aspartate 311. (2R)-2-phosphoglycerate contacts are provided by lysine 336, arginine 365, serine 366, and lysine 387. The active-site Proton acceptor is the lysine 336.

Belongs to the enolase family. Mg(2+) is required as a cofactor.

It is found in the cytoplasm. The protein localises to the secreted. The protein resides in the cell surface. It catalyses the reaction (2R)-2-phosphoglycerate = phosphoenolpyruvate + H2O. Its pathway is carbohydrate degradation; glycolysis; pyruvate from D-glyceraldehyde 3-phosphate: step 4/5. Its function is as follows. Catalyzes the reversible conversion of 2-phosphoglycerate (2-PG) into phosphoenolpyruvate (PEP). It is essential for the degradation of carbohydrates via glycolysis. The polypeptide is Enolase (Brucella melitensis biotype 2 (strain ATCC 23457)).